The following is a 1359-amino-acid chain: DNA-directed RNA polymerase subunit beta (1359 aa).

The protein belongs to the RNA polymerase beta chain family. In terms of assembly, the RNAP catalytic core consists of 2 alpha, 1 beta, 1 beta' and 1 omega subunit. When a sigma factor is associated with the core the holoenzyme is formed, which can initiate transcription.

It catalyses the reaction RNA(n) + a ribonucleoside 5'-triphosphate = RNA(n+1) + diphosphate. Functionally, DNA-dependent RNA polymerase catalyzes the transcription of DNA into RNA using the four ribonucleoside triphosphates as substrates. The protein is DNA-directed RNA polymerase subunit beta of Nitrosomonas eutropha (strain DSM 101675 / C91 / Nm57).